The sequence spans 280 residues: UPF0276 protein NGO_1946 (280 aa).

It belongs to the UPF0276 family.

This Neisseria gonorrhoeae (strain ATCC 700825 / FA 1090) protein is UPF0276 protein NGO_1946.